Consider the following 132-residue polypeptide: Small ribosomal subunit protein uS8c (132 aa).

Belongs to the universal ribosomal protein uS8 family. As to quaternary structure, part of the 30S ribosomal subunit.

The protein localises to the plastid. The protein resides in the chloroplast. Functionally, one of the primary rRNA binding proteins, it binds directly to 16S rRNA central domain where it helps coordinate assembly of the platform of the 30S subunit. This Calycanthus floridus var. glaucus (Eastern sweetshrub) protein is Small ribosomal subunit protein uS8c (rps8).